The sequence spans 751 residues: MALGEEKAEAEASEDTKAQSYGRGSCGERELDTPGPMSGEQPPRLEAEGGLTSPVWGAEGIPAPTCWIGTDPGGPSRAHQPQASDASREPVAERSEPALSGLPPATMGSGDLLLSRESQVEKTKLSASEELPQTPSLPRTTTICSGHDADTEDDPSLADLPQAPSSGLSCLSQWKSMPSPGSAAPQPSSCSVSASSTGSSLQGHQERTEPRGGSLAKVSSSLELVVPQEPSSVVGLGPRPQWSPQPVFSGGDASGLGRRRLSFQAEYWACVLPDSLPPSPDRHSPLWNPNKEYEDLLDYTYPLRPGPQLPKHLDSRVPADPVLQDSGVDLDSFSVSPASTLKSPTNVFPNCPPAEATALPLSGPREPSLKQWPSGVPQKQGGMGLASWSQLTSTPRAPGSRDARWECREPALRGAKDWLPIGKPLDMGSPQLRTRDRGWPSPRPEREKRTSQSARRPTCTESRWKSEEEVESDDEYLALPARLTQVSSLVSYIGSISTLVTLPAGDIKGQSPLEVSDTDGPASLPSSSSQSQLPPGAALRGSGDPEGQNPCFLRSFVRAQDSAGEGSLGSSQALGVSSGLLKTRPSLPARLDRWPFSDPDAEGQLPRKGGEQGKESLVQCVKTFCCQLEELICWLYNVADVTDHGTAARSNLTSLKSSLQLYRQFKKDIDEHQSLTESVLQKGEILLQCLLENTPVLEDVLGRIAKQSGELESHADRLYDSILASLDMLAGCTLIPDKKPMAAMERPREGV.

2 stretches are compositionally biased toward basic and acidic residues: residues 1-17 and 86-96; these read MALGEEKAEAEASEDTK and ASREPVAERSE. Positions 1 to 253 are disordered; that stretch reads MALGEEKAEA…PQPVFSGGDA (253 aa). Polar residues-rich tracts occupy residues 131 to 144 and 163 to 175; these read LPQTPSLPRTTTIC and APSSGLSCLSQWK. The span at 176-200 shows a compositional bias: low complexity; sequence SMPSPGSAAPQPSSCSVSASSTGSS. Ser326 is modified (phosphoserine). The span at 339–348 shows a compositional bias: polar residues; that stretch reads STLKSPTNVF. Disordered stretches follow at residues 339–474, 511–545, and 590–611; these read STLK…ESDD, SPLEVSDTDGPASLPSSSSQSQLPPGAALRGSGDP, and RLDRWPFSDPDAEGQLPRKGGE. 2 stretches are compositionally biased toward basic and acidic residues: residues 399-416 and 433-450; these read GSRDARWECREPALRGAK and RTRDRGWPSPRPEREKRT. A compositionally biased stretch (polar residues) spans 451–461; sequence SQSARRPTCTE. Ser466 and Ser472 each carry phosphoserine. Over residues 520 to 537 the composition is skewed to low complexity; it reads GPASLPSSSSQSQLPPGA.

Interacts with CNTLN; the interaction recruits CEP68 to the centrosome. Interacts with the SCF(FBXW11) complex which contains SKP1, CUL1 and FBXW11; the interaction is probably mediated by FBXW11 and the complex also contains CDK5RAP2 and PCNT. Also interacts with F-box protein BTRC. Interacts with serine/threonine-protein kinase PLK1; the interaction leads to phosphorylation of CEP68 and its subsequent degradation. Interacts with NEK2; the interaction leads to phosphorylation of CEP68. Post-translationally, phosphorylation by PLK1 is required for binding to BTRC in prometaphase. Phosphorylated directly or indirectly by NEK2. NEK2-mediated phosphorylation promotes CEP68 dissociation from the centrosome and its degradation at the onset of mitosis. Ubiquitinated and targeted for proteasomal degradation in early mitosis by the SCF(BTRC) and/or SCF(FBXW11) E3 ubiquitin-protein ligase complexes. Degradation is complete by prometaphase and is required for removal of CDK5RAP2 from the peripheral pericentriolar material and subsequent centriole separation.

Its subcellular location is the cytoplasm. The protein localises to the cytoskeleton. It is found in the microtubule organizing center. The protein resides in the centrosome. Involved in maintenance of centrosome cohesion, probably as part of a linker structure which prevents centrosome splitting. Required for localization of CDK5RAP2 to the centrosome during interphase. Contributes to CROCC/rootletin filament formation. This is Centrosomal protein of 68 kDa (CEP68) from Pongo abelii (Sumatran orangutan).